Here is a 350-residue protein sequence, read N- to C-terminus: NADH-cytochrome b5 reductase 2 (350 aa).

A helical membrane pass occupies residues 43–63; sequence PLVLALGGVAGIGAWYGLGGF. The 109-residue stretch at 96–204 folds into the FAD-binding FR-type domain; it reads DQFVEFTLKE…KGPIAKFAYK (109 aa). 207–242 contacts FAD; sequence EFESIGMIAGGSGITPMYQVIQDIASNPSDKTKVTL.

This sequence belongs to the flavoprotein pyridine nucleotide cytochrome reductase family. The cofactor is FAD.

It is found in the mitochondrion outer membrane. It carries out the reaction 2 Fe(III)-[cytochrome b5] + NADH = 2 Fe(II)-[cytochrome b5] + NAD(+) + H(+). May mediate the reduction of outer membrane cytochrome b5. The chain is NADH-cytochrome b5 reductase 2 (MCR1) from Mycosarcoma maydis (Corn smut fungus).